The following is a 350-amino-acid chain: Phosphate acyltransferase (350 aa).

The protein belongs to the PlsX family. As to quaternary structure, homodimer. Probably interacts with PlsY.

It localises to the cytoplasm. The catalysed reaction is a fatty acyl-[ACP] + phosphate = an acyl phosphate + holo-[ACP]. Its pathway is lipid metabolism; phospholipid metabolism. Catalyzes the reversible formation of acyl-phosphate (acyl-PO(4)) from acyl-[acyl-carrier-protein] (acyl-ACP). This enzyme utilizes acyl-ACP as fatty acyl donor, but not acyl-CoA. The sequence is that of Phosphate acyltransferase from Chelativorans sp. (strain BNC1).